The primary structure comprises 723 residues: UPF0313 protein YgiQ (723 aa).

Positions 372 to 650 (AYEMIRFSIN…KALLRYHDPA (279 aa)) constitute a Radical SAM core domain. Cys386, Cys390, and Cys393 together coordinate [4Fe-4S] cluster. A disordered region spans residues 686-723 (EARRQNRNTRPALTKHTPVEHQRQGLAANKKRGKGAGR). Basic residues predominate over residues 714–723 (NKKRGKGAGR).

This sequence belongs to the UPF0313 family. Requires [4Fe-4S] cluster as cofactor.

The sequence is that of UPF0313 protein YgiQ from Salmonella typhimurium (strain LT2 / SGSC1412 / ATCC 700720).